The following is a 334-amino-acid chain: Catabolite repressor/activator (334 aa).

The region spanning 1–58 is the HTH lacI-type domain; it reads MKLDEIARLAGVSRTTASYVINGKAKQYRVSDKTVEKVMAVVREHNYHPNAVAAGLRA. The H-T-H motif DNA-binding region spans 3 to 22; sequence LDEIARLAGVSRTTASYVIN.

As to quaternary structure, homotetramer.

Functionally, global transcriptional regulator, which plays an important role in the regulation of carbon metabolism. In Salmonella typhimurium (strain LT2 / SGSC1412 / ATCC 700720), this protein is Catabolite repressor/activator (cra).